The chain runs to 118 residues: Small ribosomal subunit protein eS10 (118 aa).

Residues 91-118 (RLKNAPAERPRPSRGGPRRGGYRGRARD) form a disordered region. Residues 106 to 118 (GPRRGGYRGRARD) are compositionally biased toward basic residues.

This sequence belongs to the eukaryotic ribosomal protein eS10 family. As to quaternary structure, component of the small ribosomal subunit. Mature ribosomes consist of a small (40S) and a large (60S) subunit. The 40S subunit contains about 32 different proteins and 1 molecule of RNA (18S). The 60S subunit contains 45 different proteins and 3 molecules of RNA (25S, 5.8S and 5S).

The protein resides in the cytoplasm. Component of the ribosome, a large ribonucleoprotein complex responsible for the synthesis of proteins in the cell. The small ribosomal subunit (SSU) binds messenger RNAs (mRNAs) and translates the encoded message by selecting cognate aminoacyl-transfer RNA (tRNA) molecules. The large subunit (LSU) contains the ribosomal catalytic site termed the peptidyl transferase center (PTC), which catalyzes the formation of peptide bonds, thereby polymerizing the amino acids delivered by tRNAs into a polypeptide chain. The nascent polypeptides leave the ribosome through a tunnel in the LSU and interact with protein factors that function in enzymatic processing, targeting, and the membrane insertion of nascent chains at the exit of the ribosomal tunnel. This chain is Small ribosomal subunit protein eS10 (RPS10), found in Candida albicans (strain SC5314 / ATCC MYA-2876) (Yeast).